We begin with the raw amino-acid sequence, 368 residues long: GTPase Obg (368 aa).

The 161-residue stretch at 1–161 folds into the Obg domain; the sequence is MRFVDEATIT…RSLRLELKIL (161 aa). Residues 162-337 form the OBG-type G domain; the sequence is ADAGLLGLPN…VVAEMWRMRD (176 aa). Residues 168-175, 193-197, 217-220, 290-293, and 318-320 contribute to the GTP site; these read GLPNAGKS, FTTLI, DIPG, NKID, and SAL. Positions 175 and 195 each coordinate Mg(2+).

This sequence belongs to the TRAFAC class OBG-HflX-like GTPase superfamily. OBG GTPase family. As to quaternary structure, monomer. The cofactor is Mg(2+).

Its subcellular location is the cytoplasm. In terms of biological role, an essential GTPase which binds GTP, GDP and possibly (p)ppGpp with moderate affinity, with high nucleotide exchange rates and a fairly low GTP hydrolysis rate. Plays a role in control of the cell cycle, stress response, ribosome biogenesis and in those bacteria that undergo differentiation, in morphogenesis control. In Nitratidesulfovibrio vulgaris (strain DSM 19637 / Miyazaki F) (Desulfovibrio vulgaris), this protein is GTPase Obg.